The sequence spans 657 residues: N-acetylgalactosaminyltransferase 7 (657 aa).

Over 1–6 (MRLKIG) the chain is Cytoplasmic. A helical; Signal-anchor for type II membrane protein membrane pass occupies residues 7 to 29 (FILRSLLVVGSFLGLVVLWSSLS). The disordered stretch occupies residues 30–66 (SRPDDPSPLSRMREDRDVNNPLPNRGGNGLAPGDDRF). The Lumenal segment spans residues 30–657 (SRPDDPSPLS…KWEMNNIHSV (628 aa)). 5 disulfide bridges follow: C197/C435, C426/C507, C545/C562, C585/C600, and C625/C640. The segment at 206–317 (LLTSSVVIVF…VNWYAPLVAP (112 aa)) is catalytic subdomain A. Substrate is bound by residues D247 and R277. Residues D301 and H303 each contribute to the Mn(2+) site. Residues 381–443 (PYRSPAMAGG…PCSRVGHIYR (63 aa)) are catalytic subdomain B. Residue W412 coordinates substrate. H440 is a Mn(2+) binding site. R443 is a binding site for substrate. Residues 532-652 (VEWGEIRGLE…GKMTQKWEMN (121 aa)) enclose the Ricin B-type lectin domain.

It belongs to the glycosyltransferase 2 family. GalNAc-T subfamily. Requires Mn(2+) as cofactor. Highly expressed in sublingual gland. Expressed at lower level in stomach, small intestiine and colon.

Its subcellular location is the golgi apparatus membrane. It catalyses the reaction L-seryl-[protein] + UDP-N-acetyl-alpha-D-galactosamine = a 3-O-[N-acetyl-alpha-D-galactosaminyl]-L-seryl-[protein] + UDP + H(+). The catalysed reaction is L-threonyl-[protein] + UDP-N-acetyl-alpha-D-galactosamine = a 3-O-[N-acetyl-alpha-D-galactosaminyl]-L-threonyl-[protein] + UDP + H(+). It participates in protein modification; protein glycosylation. Its function is as follows. Glycopeptide transferase involved in O-linked oligosaccharide biosynthesis, which catalyzes the transfer of an N-acetyl-D-galactosamine residue to an already glycosylated peptide. In contrast to other proteins of the family, it does not act as a peptide transferase that transfers GalNAc onto serine or threonine residue on the protein receptor, but instead requires the prior addition of a GalNAc on a peptide before adding additional GalNAc moieties. Some peptide transferase activity is however not excluded, considering that its appropriate peptide substrate may remain unidentified. In Rattus norvegicus (Rat), this protein is N-acetylgalactosaminyltransferase 7 (Galnt7).